The primary structure comprises 429 residues: Adenylosuccinate synthetase (429 aa).

Residues 12 to 18 and 40 to 42 contribute to the GTP site; these read GDEGKGK and GHT. Aspartate 13 (proton acceptor) is an active-site residue. Mg(2+)-binding residues include aspartate 13 and glycine 40. Residues 13-16, 38-41, threonine 128, arginine 142, glutamine 223, threonine 238, and arginine 302 contribute to the IMP site; these read DEGK and NAGH. Histidine 41 functions as the Proton donor in the catalytic mechanism. Position 298–304 (298–304) interacts with substrate; it reads TTTGRPR. GTP contacts are provided by residues arginine 304, 330 to 332, and 412 to 414; these read SID and SVG.

It belongs to the adenylosuccinate synthetase family. Homodimer. Requires Mg(2+) as cofactor.

The protein localises to the cytoplasm. The enzyme catalyses IMP + L-aspartate + GTP = N(6)-(1,2-dicarboxyethyl)-AMP + GDP + phosphate + 2 H(+). The protein operates within purine metabolism; AMP biosynthesis via de novo pathway; AMP from IMP: step 1/2. Plays an important role in the de novo pathway of purine nucleotide biosynthesis. Catalyzes the first committed step in the biosynthesis of AMP from IMP. This is Adenylosuccinate synthetase from Lysinibacillus sphaericus (strain C3-41).